The sequence spans 200 residues: Integrin beta-1-binding protein 1 (200 aa).

A compositionally biased stretch (basic residues) spans 1–10 (MFRKGKKRHS). The disordered stretch occupies residues 1–55 (MFRKGKKRHSSSSSQSSEISTKSKSVDSSLGGLSRSSTVASLDTDSTKSSGQSNS). The Nuclear localization signal motif lies at 6–7 (KK). Over residues 11–29 (SSSSQSSEISTKSKSVDSS) the composition is skewed to low complexity. A compositionally biased stretch (polar residues) spans 34 to 55 (SRSSTVASLDTDSTKSSGQSNS). Residue threonine 38 is modified to Phosphothreonine; by CaMK2. Position 41 is a phosphoserine (serine 41). Positions 58–200 (DTCAEFRIKY…FDSVLTSDKS (143 aa)) constitute a PID domain. Positions 136 to 139 (YLII) are interaction with KRIT1. The tract at residues 139 to 141 (IRM) is interaction with ITGB1.

In terms of assembly, found in a complex, at least composed of ITGB1BP1, KRIT1 and RAP1A. Interacts (via C-terminal region) with ITGB1 (via C-terminal cytoplasmic tail); the interaction prevents talin TLN1 binding to ITGB1 and KRIT1 and ITGB1 compete for the same binding site. Interacts with KRIT1 (via N-terminal NPXY motif); the interaction induces the opening conformation of KRIT1 and KRIT1 and ITGB1 compete for the same binding site. Isoform 2 does not interact with ITGB1. Interacts with CDC42 (GTP- or GDP-bound form); the interaction is increased with the CDC42-membrane bound forms and prevents both CDC42 activation and cell spreading. Interacts (via C-terminal domain region) with NME2. Interacts with FERMT2 and RAC1. Interacts (via N-terminus and PTB domain) with ROCK1. Post-translationally, phosphorylation at Thr-38 seems to enhance integrin alpha5beta1-mediated cell adhesion. The degree of phosphorylation is regulated by integrin-dependent cell-matrix interaction. As to expression, expressed in the brain.

The protein resides in the nucleus. It is found in the cytoplasm. It localises to the cytoskeleton. Its subcellular location is the cell membrane. The protein localises to the cell projection. The protein resides in the lamellipodium. It is found in the ruffle. Key regulator of the integrin-mediated cell-matrix interaction signaling by binding to the ITGB1 cytoplasmic tail and preventing the activation of integrin alpha-5/beta-1 (heterodimer of ITGA5 and ITGB1) by talin or FERMT1. Plays a role in cell proliferation, differentiation, spreading, adhesion and migration in the context of mineralization and bone development and angiogenesis. Stimulates cellular proliferation in a fibronectin-dependent manner. Involved in the regulation of beta-1 integrin-containing focal adhesion (FA) site dynamics by controlling its assembly rate during cell adhesion; inhibits beta-1 integrin clustering within FA by directly competing with talin TLN1, and hence stimulates osteoblast spreading and migration in a fibronectin- and/or collagen-dependent manner. Acts as a guanine nucleotide dissociation inhibitor (GDI) by regulating Rho family GTPases during integrin-mediated cell matrix adhesion; reduces the level of active GTP-bound form of both CDC42 and RAC1 GTPases upon cell adhesion to fibronectin. Stimulates the release of active CDC42 from the membranes to maintain it in an inactive cytoplasmic pool. Participates in the translocation of the Rho-associated protein kinase ROCK1 to membrane ruffles at cell leading edges of the cell membrane, leading to an increase of myoblast cell migration on laminin. Plays a role in bone mineralization at a late stage of osteoblast differentiation; modulates the dynamic formation of focal adhesions into fibrillar adhesions, which are adhesive structures responsible for fibronectin deposition and fibrillogenesis. Plays a role in blood vessel development; acts as a negative regulator of angiogenesis by attenuating endothelial cell proliferation and migration, lumen formation and sprouting angiogenesis by promoting AKT phosphorylation and inhibiting ERK1/2 phosphorylation through activation of the Notch signaling pathway. Promotes transcriptional activity of the MYC promoter. The polypeptide is Integrin beta-1-binding protein 1 (Itgb1bp1) (Mus musculus (Mouse)).